Reading from the N-terminus, the 445-residue chain is ATP-dependent rRNA helicase rrp3 (445 aa).

The span at 1-10 (MSKNSSRDSS) shows a compositional bias: basic and acidic residues. Residues 1-28 (MSKNSSRDSSPEEVSPDTETPSTTTAPK) form a disordered region. The segment covering 17-28 (DTETPSTTTAPK) has biased composition (low complexity). Residues 28–56 (KTFRELGVIDSLCEACEELGYTAPTPIQE) carry the Q motif motif. In terms of domain architecture, Helicase ATP-binding spans 59 to 229 (IPIALEGRDL…RASLSDPVRV (171 aa)). 72–79 (AETGSGKT) is a binding site for ATP. Positions 178–181 (DEAD) match the DEAD box motif. Residues 240–400 (KLLQSYLFIP…EYKPEKDEVM (161 aa)) form the Helicase C-terminal domain. Residues 415–445 (LTMRDMQDKDNKGRGPRNRKRTRDDLDQDDG) are disordered.

The protein belongs to the DEAD box helicase family. DDX47/RRP3 subfamily. Interacts with the SSU processome.

It localises to the nucleus. The enzyme catalyses ATP + H2O = ADP + phosphate + H(+). Its function is as follows. ATP-dependent rRNA helicase required for pre-ribosomal RNA processing. Involved in the maturation of the 35S-pre-rRNA and to its cleavage to mature 18S rRNA. The sequence is that of ATP-dependent rRNA helicase rrp3 from Aspergillus terreus (strain NIH 2624 / FGSC A1156).